Consider the following 308-residue polypeptide: Methionyl-tRNA formyltransferase (308 aa).

110 to 113 (SLLP) lines the (6S)-5,6,7,8-tetrahydrofolate pocket.

Belongs to the Fmt family.

It catalyses the reaction L-methionyl-tRNA(fMet) + (6R)-10-formyltetrahydrofolate = N-formyl-L-methionyl-tRNA(fMet) + (6S)-5,6,7,8-tetrahydrofolate + H(+). Attaches a formyl group to the free amino group of methionyl-tRNA(fMet). The formyl group appears to play a dual role in the initiator identity of N-formylmethionyl-tRNA by promoting its recognition by IF2 and preventing the misappropriation of this tRNA by the elongation apparatus. This Neisseria gonorrhoeae (strain NCCP11945) protein is Methionyl-tRNA formyltransferase.